A 394-amino-acid chain; its full sequence is Probable ribosome production factor 1 (394 aa).

Disordered regions lie at residues 1-98 (MIKI…PVLN) and 116-152 (MKKEKHKKKMQERRARRKAGVPANPGHTIESLREKDQ). Composition is skewed to acidic residues over residues 15 to 33 (QDSDSDSSFDEEEPQDLEV) and 59 to 88 (ASEDLKEEDDDDDEEENDDDDEEEDDDDDD). Residues 116–134 (MKKEKHKKKMQERRARRKA) show a composition bias toward basic residues. The region spanning 185–369 (PKVLITFADN…LRSLQEGTFD (185 aa)) is the Brix domain. Positions 347–364 (VKLRELGPRFTLKLRSLQ) are RNA-binding.

It localises to the nucleus. It is found in the nucleolus. Its function is as follows. May be required for ribosome biogenesis. The polypeptide is Probable ribosome production factor 1 (Drosophila melanogaster (Fruit fly)).